Consider the following 373-residue polypeptide: MKYTKQNFMMSVLGIIIYVTDLIVDIWVSVRFFHEGQYVFSALALSFMLFGTLVAQCFSYSWFKADLKKAGQESQHCFLLLHCLQGGVFTRYWFALKRGYHAAFKYDSNTSNFVEEQIDLHKEVIDRVTDLSMLRLFETYLEGCPQLILQLYILLEHGQANFSQYAAIMVSCCAISWSTVDYQVALRKSLPDKKLLNGLCPKITYLFYKLFTLLSWMLSVVLLLFLNVKIALFLLLFLWLLGIIWAFKNNTQFCTCISMEFLYRIVVGFILIFTFFNIKGQNTKCPMSCYYIVRVLGTLGILTVFWVCPLNIFNPDYFIPISITIVLTLLLGILFLIVYYGSFHPNRSAETKCDEIDGKPVLRECRMRYFLME.

8 helical membrane-spanning segments follow: residues 8-28 (FMMS…DIWV), 38-58 (YVFS…AQCF), 166-186 (AAIM…QVAL), 203-223 (ITYL…VVLL), 224-244 (LFLN…LGII), 256-276 (CISM…FTFF), 295-315 (VLGT…IFNP), and 318-338 (FIPI…FLIV).

This sequence belongs to the XK family. Undergoes proteolytic processing by caspase-3 (CASP3), caspase-6 (CASP6) and caspase-7 (CASP7) to generate the XK-related protein 9, processed form, leading to its activation.

It is found in the cell membrane. The enzyme catalyses a 1,2-diacyl-sn-glycero-3-phospho-L-serine(in) = a 1,2-diacyl-sn-glycero-3-phospho-L-serine(out). Its activity is regulated as follows. Activated upon caspase cleavage to generate the XK-related protein 9, processed form. Does not act prior the onset of apoptosis. In terms of biological role, phospholipid scramblase that promotes phosphatidylserine exposure on apoptotic cell surface. Phosphatidylserine is a specific marker only present at the surface of apoptotic cells and acts as a specific signal for engulfment. This is XK-related protein 9 from Pan troglodytes (Chimpanzee).